A 941-amino-acid chain; its full sequence is Ankyrin repeat and MYND domain-containing protein 1 (941 aa).

3 MORN repeats span residues 2-24 (YQGE…TGES), 25-47 (YHGQ…DGSS), and 70-92 (FQGL…DGSQ). ANK repeat units follow at residues 292 to 321 (KGYT…DVNK), 513 to 542 (MRRM…DPNL), 545 to 574 (VPMQ…RTDI), 581 to 613 (STLT…DVDA), 657 to 691 (GGRT…NPNL), 694 to 723 (SGHS…DPNL), and 737 to 766 (CDLT…DILK). Zn(2+)-binding residues include Cys-880, Cys-883, Cys-894, Cys-897, Cys-903, Cys-907, His-916, and Cys-920. An MYND-type zinc finger spans residues 880 to 920 (CYQCGRSIGVRLLPCPRCYGILTCSKYCKTKAWTEFHKKDC).

This Homo sapiens (Human) protein is Ankyrin repeat and MYND domain-containing protein 1 (ANKMY1).